Reading from the N-terminus, the 380-residue chain is Glycogenin-2 (380 aa).

3 residues coordinate UDP: leucine 10, tyrosine 16, and arginine 95. UDP-alpha-D-glucose contacts are provided by leucine 10, tyrosine 16, arginine 95, lysine 104, aspartate 120, alanine 121, aspartate 122, asparagine 158, threonine 159, aspartate 185, aspartate 188, and glutamine 189. UDP is bound by residues aspartate 120, alanine 121, and aspartate 122. Residue aspartate 120 coordinates Mn(2+). Position 122 (aspartate 122) interacts with Mn(2+). O-linked (Glc...) tyrosine glycosylation is found at tyrosine 230 and tyrosine 232. UDP is bound by residues histidine 249, glycine 252, and lysine 255. Histidine 249 serves as a coordination point for Mn(2+). Positions 252 and 255 each coordinate UDP-alpha-D-glucose. The interval 331 to 357 (SVDRNASQKSTAEKHDIEKPTSKPQSA) is disordered. Over residues 341–351 (TAEKHDIEKPT) the composition is skewed to basic and acidic residues. Tyrosine 367 carries O-linked (Glc...) tyrosine glycosylation.

Belongs to the glycosyltransferase 8 family. Glycogenin subfamily. Interacts with glycogen synthase GSY2. Mn(2+) serves as cofactor.

The protein resides in the cytoplasm. Its subcellular location is the vacuole. It carries out the reaction L-tyrosyl-[glycogenin] + UDP-alpha-D-glucose = alpha-D-glucosyl-L-tyrosyl-[glycogenin] + UDP + H(+). It catalyses the reaction [1,4-alpha-D-glucosyl](n)-L-tyrosyl-[glycogenin] + UDP-alpha-D-glucose = [1,4-alpha-D-glucosyl](n+1)-L-tyrosyl-[glycogenin] + UDP + H(+). Its function is as follows. Self-glucosylating initiator of glycogen synthesis. It catalyzes the formation of a short alpha (1,4)-glucosyl chain covalently attached via a glucose 1-O-tyrosyl linkage to internal tyrosine residues and these chains act as primers for the elongation reaction catalyzed by glycogen synthase. Capable of transferring glucosyl residues to unbound acceptors such as free oligoglucans or oligoglucan derivatives. In Saccharomyces cerevisiae (strain YJM789) (Baker's yeast), this protein is Glycogenin-2 (GLG2).